Consider the following 195-residue polypeptide: UPF0314 protein RL4541 (195 aa).

A run of 4 helical transmembrane segments spans residues 15-35, 64-84, 127-147, and 150-170; these read FWFVACFAVLVIQIAVEYMMG, WYTPSHIIHGFLFYGLAHLIL, GDSILNSAMDTVFMCVGFFFA, and APVALTVAIATFFEIFTGYII.

It belongs to the UPF0314 family.

It localises to the cell membrane. This Rhizobium johnstonii (strain DSM 114642 / LMG 32736 / 3841) (Rhizobium leguminosarum bv. viciae) protein is UPF0314 protein RL4541.